Reading from the N-terminus, the 529-residue chain is G-protein coupled receptor 161 (529 aa).

Residues Met-1 to Gln-30 are Extracellular-facing. 2 N-linked (GlcNAc...) asparagine glycosylation sites follow: Asn-4 and Asn-15. A helical transmembrane segment spans residues Phe-31–Thr-51. The Cytoplasmic segment spans residues Leu-52 to Lys-64. The chain crosses the membrane as a helical span at residues Phe-65–Val-85. Residues Thr-86–Asn-101 lie on the Extracellular side of the membrane. The cysteines at positions 100 and 178 are disulfide-linked. A helical membrane pass occupies residues Phe-102–Ile-123. Topologically, residues Asp-124–Arg-143 are cytoplasmic. Residues Ala-144–Phe-164 form a helical membrane-spanning segment. Residues Gly-165–Ala-190 are Extracellular-facing. Residues Phe-191–Ile-211 form a helical membrane-spanning segment. Over Phe-212–Leu-269 the chain is Cytoplasmic. A helical transmembrane segment spans residues Ile-270 to Ile-290. The Extracellular segment spans residues Ala-291 to Glu-306. Residues Thr-307 to Trp-327 form a helical membrane-spanning segment. Topologically, residues Asn-328–Arg-529 are cytoplasmic.

It belongs to the G-protein coupled receptor 1 family.

Its subcellular location is the cell projection. The protein localises to the cilium membrane. The protein resides in the cell membrane. In terms of biological role, key negative regulator of Shh signaling, which promotes the processing of GLI3 into GLI3R during neural tube development. Recruited by TULP3 and the IFT-A complex to primary cilia and acts as a regulator of the PKA-dependent basal repression machinery in Shh signaling by increasing cAMP levels, leading to promote the PKA-dependent processing of GLI3 into GLI3R and repress the Shh signaling. In presence of SHH, it is removed from primary cilia and is internalized into recycling endosomes, preventing its activity and allowing activation of the Shh signaling. Its ligand is unknown. The chain is G-protein coupled receptor 161 (GPR161) from Homo sapiens (Human).